The primary structure comprises 433 residues: Glutamate-1-semialdehyde 2,1-aminomutase (433 aa).

Lysine 265 is modified (N6-(pyridoxal phosphate)lysine).

This sequence belongs to the class-III pyridoxal-phosphate-dependent aminotransferase family. HemL subfamily. In terms of assembly, homodimer. It depends on pyridoxal 5'-phosphate as a cofactor.

It is found in the cytoplasm. It catalyses the reaction (S)-4-amino-5-oxopentanoate = 5-aminolevulinate. It participates in porphyrin-containing compound metabolism; protoporphyrin-IX biosynthesis; 5-aminolevulinate from L-glutamyl-tRNA(Glu): step 2/2. The polypeptide is Glutamate-1-semialdehyde 2,1-aminomutase (Shewanella denitrificans (strain OS217 / ATCC BAA-1090 / DSM 15013)).